The following is a 392-amino-acid chain: Probable protein phosphatase 2C 78 (392 aa).

In terms of domain architecture, PPM-type phosphatase spans 39–342 (ASGEYSIAVA…DDITVVVVYL (304 aa)). Mn(2+) contacts are provided by Asp-73, Gly-74, Asp-274, and Asp-333.

Belongs to the PP2C family. Mg(2+) serves as cofactor. The cofactor is Mn(2+).

It catalyses the reaction O-phospho-L-seryl-[protein] + H2O = L-seryl-[protein] + phosphate. The catalysed reaction is O-phospho-L-threonyl-[protein] + H2O = L-threonyl-[protein] + phosphate. This is Probable protein phosphatase 2C 78 from Oryza sativa subsp. japonica (Rice).